The sequence spans 323 residues: Fructose-1,6-bisphosphatase class 1 (323 aa).

Mg(2+) contacts are provided by Glu-90, Asp-111, Leu-113, and Asp-114. Substrate is bound by residues 114–117 (DGSS), Tyr-222, and Lys-253. Glu-259 serves as a coordination point for Mg(2+).

It belongs to the FBPase class 1 family. Homotetramer. Mg(2+) serves as cofactor.

The protein resides in the cytoplasm. The catalysed reaction is beta-D-fructose 1,6-bisphosphate + H2O = beta-D-fructose 6-phosphate + phosphate. Its pathway is carbohydrate biosynthesis; gluconeogenesis. This Pelobacter propionicus (strain DSM 2379 / NBRC 103807 / OttBd1) protein is Fructose-1,6-bisphosphatase class 1.